The following is a 177-amino-acid chain: MKMIVGLGNPGSKYAKTKHNIGFMVIDQLCEKYNVTLNKHDFEAEYGSFKYEGETVLLVKPLTFMNDSGRSVGPLMSYYQVGIDELLVIQDDMDLTMGKLRLRQKGSAGGHNGIKSIIAHTKSQTFKRLKIGIQHPQKSTVVNWVLTPFDKDGAPVINQAIDQACEESTTGVKMTTL.

Tyr-14 is a tRNA binding site. The active-site Proton acceptor is the His-19. TRNA-binding residues include Phe-64, Asn-66, and Asn-112.

Belongs to the PTH family. In terms of assembly, monomer.

The protein localises to the cytoplasm. It catalyses the reaction an N-acyl-L-alpha-aminoacyl-tRNA + H2O = an N-acyl-L-amino acid + a tRNA + H(+). Hydrolyzes ribosome-free peptidyl-tRNAs (with 1 or more amino acids incorporated), which drop off the ribosome during protein synthesis, or as a result of ribosome stalling. In terms of biological role, catalyzes the release of premature peptidyl moieties from peptidyl-tRNA molecules trapped in stalled 50S ribosomal subunits, and thus maintains levels of free tRNAs and 50S ribosomes. The protein is Peptidyl-tRNA hydrolase of Latilactobacillus sakei (Lactobacillus sakei).